We begin with the raw amino-acid sequence, 251 residues long: Methionine aminopeptidase (251 aa).

Residue His76 participates in substrate binding. A divalent metal cation is bound by residues Asp93, Asp104, and His168. A substrate-binding site is contributed by His175. A divalent metal cation is bound by residues Glu202 and Glu233.

It belongs to the peptidase M24A family. Methionine aminopeptidase type 1 subfamily. In terms of assembly, monomer. It depends on Co(2+) as a cofactor. The cofactor is Zn(2+). Requires Mn(2+) as cofactor. Fe(2+) serves as cofactor.

It catalyses the reaction Release of N-terminal amino acids, preferentially methionine, from peptides and arylamides.. In terms of biological role, removes the N-terminal methionine from nascent proteins. The N-terminal methionine is often cleaved when the second residue in the primary sequence is small and uncharged (Met-Ala-, Cys, Gly, Pro, Ser, Thr, or Val). Requires deformylation of the N(alpha)-formylated initiator methionine before it can be hydrolyzed. The protein is Methionine aminopeptidase of Staphylococcus epidermidis (strain ATCC 12228 / FDA PCI 1200).